A 212-amino-acid chain; its full sequence is NAD(P)H-hydrate epimerase (212 aa).

The region spanning 11–212 is the YjeF N-terminal domain; sequence MRHYDSYTIN…ANDMGTYAVD (202 aa). 60-64 provides a ligand contact to (6S)-NADPHX; the sequence is NNGGD. K(+) contacts are provided by Asn-61 and Asp-123. (6S)-NADPHX is bound by residues 127–133, Tyr-138, and Asp-156; that span reads GIGIDRA. Residue Ser-159 participates in K(+) binding.

Belongs to the NnrE/AIBP family. Requires K(+) as cofactor.

It carries out the reaction (6R)-NADHX = (6S)-NADHX. The catalysed reaction is (6R)-NADPHX = (6S)-NADPHX. Functionally, catalyzes the epimerization of the S- and R-forms of NAD(P)HX, a damaged form of NAD(P)H that is a result of enzymatic or heat-dependent hydration. This is a prerequisite for the S-specific NAD(P)H-hydrate dehydratase to allow the repair of both epimers of NAD(P)HX. The sequence is that of NAD(P)H-hydrate epimerase from Limosilactobacillus reuteri (strain ATCC 55730 / SD2112) (Lactobacillus reuteri).